The primary structure comprises 473 residues: Photosystem II CP43 reaction center protein (473 aa).

A propeptide spanning residues 1 to 14 (MKTLYSPRRYYPVE) is cleaved from the precursor. Residue Thr-15 is modified to N-acetylthreonine. Position 15 is a phosphothreonine (Thr-15). The next 5 membrane-spanning stretches (helical) occupy residues 69 to 93 (LFEV…PHLA), 134 to 155 (IIGP…KDKN), 178 to 200 (KAVW…RVIT), 255 to 275 (KPFA…LSYS), and 291 to 312 (WFNN…ASQA). [CaMn4O5] cluster is bound at residue Glu-367. A helical transmembrane segment spans residues 447–471 (RARAAAAGFEKGIERETEPVLFMSP).

This sequence belongs to the PsbB/PsbC family. PsbC subfamily. PSII is composed of 1 copy each of membrane proteins PsbA, PsbB, PsbC, PsbD, PsbE, PsbF, PsbH, PsbI, PsbJ, PsbK, PsbL, PsbM, PsbT, PsbX, PsbY, PsbZ, Psb30/Ycf12, at least 3 peripheral proteins of the oxygen-evolving complex and a large number of cofactors. It forms dimeric complexes. It depends on Binds multiple chlorophylls and provides some of the ligands for the Ca-4Mn-5O cluster of the oxygen-evolving complex. It may also provide a ligand for a Cl- that is required for oxygen evolution. PSII binds additional chlorophylls, carotenoids and specific lipids. as a cofactor.

It localises to the plastid. The protein resides in the chloroplast thylakoid membrane. Functionally, one of the components of the core complex of photosystem II (PSII). It binds chlorophyll and helps catalyze the primary light-induced photochemical processes of PSII. PSII is a light-driven water:plastoquinone oxidoreductase, using light energy to abstract electrons from H(2)O, generating O(2) and a proton gradient subsequently used for ATP formation. The protein is Photosystem II CP43 reaction center protein of Chaetosphaeridium globosum (Charophycean green alga).